The sequence spans 441 residues: S-adenosylmethionine synthase 1 (441 aa).

A Mg(2+)-binding site is contributed by glutamate 9. Histidine 15 provides a ligand contact to ATP. Glutamate 43 is a K(+) binding site. Residues glutamate 56 and glutamine 99 each coordinate L-methionine. ATP contacts are provided by residues 167–169 (DGK), 235–238 (SGRF), aspartate 246, 252–253 (RK), alanine 269, lysine 273, and lysine 277. Residue aspartate 246 coordinates L-methionine. An L-methionine-binding site is contributed by lysine 277.

This sequence belongs to the AdoMet synthase family. In terms of assembly, homotetramer. Mn(2+) is required as a cofactor. Mg(2+) serves as cofactor. It depends on Co(2+) as a cofactor. Requires K(+) as cofactor.

It is found in the cytoplasm. It carries out the reaction L-methionine + ATP + H2O = S-adenosyl-L-methionine + phosphate + diphosphate. It functions in the pathway amino-acid biosynthesis; S-adenosyl-L-methionine biosynthesis; S-adenosyl-L-methionine from L-methionine: step 1/1. Functionally, catalyzes the formation of S-adenosylmethionine from methionine and ATP. The reaction comprises two steps that are both catalyzed by the same enzyme: formation of S-adenosylmethionine (AdoMet) and triphosphate, and subsequent hydrolysis of the triphosphate. This is S-adenosylmethionine synthase 1 (SAMS1) from Daucus carota (Wild carrot).